We begin with the raw amino-acid sequence, 474 residues long: 2-succinylbenzoate--CoA ligase (474 aa).

Belongs to the ATP-dependent AMP-binding enzyme family. MenE subfamily.

It carries out the reaction 2-succinylbenzoate + ATP + CoA = 2-succinylbenzoyl-CoA + AMP + diphosphate. The protein operates within quinol/quinone metabolism; 1,4-dihydroxy-2-naphthoate biosynthesis; 1,4-dihydroxy-2-naphthoate from chorismate: step 5/7. It participates in quinol/quinone metabolism; menaquinone biosynthesis. Functionally, converts 2-succinylbenzoate (OSB) to 2-succinylbenzoyl-CoA (OSB-CoA). This is 2-succinylbenzoate--CoA ligase from Staphylococcus epidermidis (strain ATCC 12228 / FDA PCI 1200).